A 100-amino-acid chain; its full sequence is Urease subunit gamma (100 aa).

This sequence belongs to the urease gamma subunit family. Heterotrimer of UreA (gamma), UreB (beta) and UreC (alpha) subunits. Three heterotrimers associate to form the active enzyme.

It localises to the cytoplasm. The catalysed reaction is urea + 2 H2O + H(+) = hydrogencarbonate + 2 NH4(+). Its pathway is nitrogen metabolism; urea degradation; CO(2) and NH(3) from urea (urease route): step 1/1. This chain is Urease subunit gamma, found in Pseudomonas fluorescens (strain ATCC BAA-477 / NRRL B-23932 / Pf-5).